A 338-amino-acid chain; its full sequence is RNA 3'-terminal phosphate cyclase (338 aa).

ATP is bound by residues Q103 and 283–287 (YLADQ). H308 acts as the Tele-AMP-histidine intermediate in catalysis.

Belongs to the RNA 3'-terminal cyclase family. Type 1 subfamily.

It is found in the cytoplasm. The catalysed reaction is a 3'-end 3'-phospho-ribonucleotide-RNA + ATP = a 3'-end 2',3'-cyclophospho-ribonucleotide-RNA + AMP + diphosphate. Its function is as follows. Catalyzes the conversion of 3'-phosphate to a 2',3'-cyclic phosphodiester at the end of RNA. The mechanism of action of the enzyme occurs in 3 steps: (A) adenylation of the enzyme by ATP; (B) transfer of adenylate to an RNA-N3'P to produce RNA-N3'PP5'A; (C) and attack of the adjacent 2'-hydroxyl on the 3'-phosphorus in the diester linkage to produce the cyclic end product. The biological role of this enzyme is unknown but it is likely to function in some aspects of cellular RNA processing. This is RNA 3'-terminal phosphate cyclase from Shigella sonnei (strain Ss046).